The sequence spans 273 residues: Putative pyruvate, phosphate dikinase regulatory protein (273 aa).

149 to 156 (GPSRTSKT) lines the ADP pocket.

It belongs to the pyruvate, phosphate/water dikinase regulatory protein family. PDRP subfamily.

It catalyses the reaction N(tele)-phospho-L-histidyl/L-threonyl-[pyruvate, phosphate dikinase] + ADP = N(tele)-phospho-L-histidyl/O-phospho-L-threonyl-[pyruvate, phosphate dikinase] + AMP + H(+). It carries out the reaction N(tele)-phospho-L-histidyl/O-phospho-L-threonyl-[pyruvate, phosphate dikinase] + phosphate + H(+) = N(tele)-phospho-L-histidyl/L-threonyl-[pyruvate, phosphate dikinase] + diphosphate. Bifunctional serine/threonine kinase and phosphorylase involved in the regulation of the pyruvate, phosphate dikinase (PPDK) by catalyzing its phosphorylation/dephosphorylation. The chain is Putative pyruvate, phosphate dikinase regulatory protein from Rickettsia bellii (strain OSU 85-389).